The primary structure comprises 1642 residues: Cobra venom factor (1642 aa).

An N-terminal signal peptide occupies residues 1–22; that stretch reads MERMALYLVAALLIGFPGSSHG. Residues asparagine 153, asparagine 158, and asparagine 209 are each glycosylated (N-linked (GlcNAc...) asparagine). Proline 516, aspartate 539, valine 540, and aspartate 542 together coordinate Mg(2+). 12 cysteine pairs are disulfide-bonded: cysteine 544-cysteine 801, cysteine 609-cysteine 644, cysteine 677-cysteine 704, cysteine 678-cysteine 711, cysteine 691-cysteine 712, cysteine 857-cysteine 1492, cysteine 1340-cysteine 1468, cysteine 1368-cysteine 1437, cysteine 1485-cysteine 1490, cysteine 1497-cysteine 1569, cysteine 1516-cysteine 1640, and cysteine 1616-cysteine 1625. Residues 650–732 constitute a propeptide that is removed on maturation; sequence RRRRSSVLLL…QRESELFLAR (83 aa). The tract at residues 654–732 is C3a-like domain; it reads SSVLLLDSNA…QRESELFLAR (79 aa). The region spanning 677 to 712 is the Anaphylatoxin-like domain; the sequence is CCEDVMHENPMGYTCEKRAKYIQEGDACKAAFLECC. The interval 736 to 747 is factor B binding site; the sequence is EDGFIADSDIIS. Positions 985-1263 are excised as a propeptide; that stretch reads HLIITPSGCG…VMAFQALAEY (279 aa). The tract at residues 985 to 1263 is C3d-like domain; the sequence is HLIITPSGCG…VMAFQALAEY (279 aa). Residues 993-996 constitute a cross-link (isoglutamyl cysteine thioester (Cys-Gln)); that stretch reads CGEQ. The interval 1190 to 1253 is factor H binding site; that stretch reads VLMAASTGRD…GETYGQTQAT (64 aa). Asparagine 1346 carries an N-linked (GlcNAc...) asparagine glycan. The NTR domain occupies 1497 to 1640; the sequence is CSSLNHQERI…FSYTLTEFGC (144 aa).

Belongs to the venom complement C3 homolog family. In terms of assembly, heterotrimer of alpha, beta and gamma chains; disulfide-linked. Is active with factor B in the presence of factor D. Post-translationally, first processed by the removal of 4 Arg residues by furin-type protease, forming two chains, alpha and gamma/beta precursor, linked by a disulfide bond. Probably, the cobrin cleaves the C3a-like domain and then the C3d-like domain, generating the mature cobra venom factor (CVF). This mature CVF is composed of three chains: alpha, gamma and beta. Contains 3 N-linked oligosaccharide chains, two in the alpha-chain and one in the beta-chain. Glycosylation is not required for the biological activity. However, it contributes to the immunogenicity of CVF. The carbohydrate content is 7.4. The major oligosaccharide is a symmetric fucosylated biantennary complex-type chain with an unusual alpha-galactosylated Le(x) structure at its non-reducing end. Expressed by the venom gland.

It is found in the secreted. Its function is as follows. Complement-activating protein in cobra venom. It is a structural and functional analog of complement component C3b, the activated form of C3. It binds factor B (CFB), which is subsequently cleaved by factor D (CFD) to form the bimolecular complex CVF/Bb. CVF/Bb is a C3/C5 convertase that cleaves both complement components C3 and C5. Structurally, it resembles the C3b degradation product C3c, which is not able to form a C3/C5 convertase. Unlike C3b/Bb, CVF/Bb is a stable complex and completely resistant to the actions of complement regulatory factors H (CFH) and I (CFI). Therefore, CVF continuously activates complement resulting in the depletion of complement activity. The chain is Cobra venom factor from Naja kaouthia (Monocled cobra).